The sequence spans 1480 residues: Tubulin-specific chaperone D (1480 aa).

2 disordered regions span residues 1 to 32 (MENSEDISLNSSEKSIESSVVNLEDQQQSQQQ) and 453 to 476 (NNNNNNNNNENNNEEGEEEEEEIP). 2 stretches are compositionally biased toward low complexity: residues 7–32 (ISLNSSEKSIESSVVNLEDQQQSQQQ) and 453–463 (NNNNNNNNNEN). A compositionally biased stretch (acidic residues) spans 464 to 476 (NNEEGEEEEEEIP). The stretch at 482 to 520 (ILEEIMKSLKDKDTIIRWTSAKAIGRIVNLLPKDMGDQV) is one HEAT 1 repeat. Residues 859–880 (KPIITPPSSKSTTNNNNNNNNN) form a disordered region. One copy of the HEAT 2 repeat lies at 886 to 922 (EIAFNIILGYLNENLNHPNEEVQKEASKAFELLFSKY). The segment at 1437-1480 (NPHKQSDDNNNNNNGELINNNTENNNNNNFDDNLPEDSQDLMEI) is disordered. A compositionally biased stretch (low complexity) spans 1444-1468 (DNNNNNNGELINNNTENNNNNNFDD). Acidic residues predominate over residues 1469–1480 (NLPEDSQDLMEI).

Belongs to the TBCD family. As to quaternary structure, supercomplex made of cofactors A to E. Cofactors A and D function by capturing and stabilizing tubulin in a quasi-native conformation. Cofactor E binds to the cofactor D-tubulin complex; interaction with cofactor C then causes the release of tubulin polypeptides that are committed to the native state.

Functionally, tubulin-folding protein; involved in the first step of the tubulin folding pathway. The polypeptide is Tubulin-specific chaperone D (tbcd) (Dictyostelium discoideum (Social amoeba)).